Consider the following 95-residue polypeptide: Co-chaperonin GroES (95 aa).

Belongs to the GroES chaperonin family. As to quaternary structure, heptamer of 7 subunits arranged in a ring. Interacts with the chaperonin GroEL.

It localises to the cytoplasm. Its function is as follows. Together with the chaperonin GroEL, plays an essential role in assisting protein folding. The GroEL-GroES system forms a nano-cage that allows encapsulation of the non-native substrate proteins and provides a physical environment optimized to promote and accelerate protein folding. GroES binds to the apical surface of the GroEL ring, thereby capping the opening of the GroEL channel. This chain is Co-chaperonin GroES, found in Clostridium acetobutylicum (strain ATCC 824 / DSM 792 / JCM 1419 / IAM 19013 / LMG 5710 / NBRC 13948 / NRRL B-527 / VKM B-1787 / 2291 / W).